The sequence spans 200 residues: Phospholipase A2 inhibitor 1 (200 aa).

The N-terminal stretch at 1 to 19 (MKSLHIICLLFIFVARGNS) is a signal peptide. 8 disulfides stabilise this stretch: C22–C46, C25–C32, C39–C67, C73–C94, C95–C100, C118–C143, C136–C165, and C169–C191. N-linked (GlcNAc...) asparagine glycosylation is present at N176.

The protein belongs to the CNF-like-inhibitor family. As to quaternary structure, occurs as a mixture of oligomers. Tetrameric arrangement appears to be the predominant quaternary structure. In terms of processing, N-glycosylated. As to expression, expressed by the liver.

It is found in the secreted. Its function is as follows. Inhibits basic phospholipase A2 isozymes PLA-B, BP-I and BP-II. This chain is Phospholipase A2 inhibitor 1, found in Protobothrops flavoviridis (Habu).